Reading from the N-terminus, the 516-residue chain is Probable cyclic di-GMP phosphodiesterase PdeB (516 aa).

Helical transmembrane passes span 6–26 (LVGL…GLSI) and 242–262 (QVFI…MFVL). One can recognise an EAL domain in the interval 268 to 516 (IQSPHHRLQD…DFLRWAEQHL (249 aa)).

The protein localises to the cell inner membrane. The enzyme catalyses 3',3'-c-di-GMP + H2O = 5'-phosphoguanylyl(3'-&gt;5')guanosine + H(+). Its function is as follows. Phosphodiesterase (PDE) that catalyzes the hydrolysis of cyclic-di-GMP (c-di-GMP) to 5'-pGpG. The sequence is that of Probable cyclic di-GMP phosphodiesterase PdeB from Escherichia coli (strain K12).